Here is a 709-residue protein sequence, read N- to C-terminus: UvrABC system protein B (709 aa).

In terms of domain architecture, Helicase ATP-binding spans 35–416 (ERVEAGEKDV…YELGQADGYV (382 aa)). Residue 48-55 (GATGTGKS) coordinates ATP. The short motif at 101-124 (YYDYYQPEAYVPQTDTFIEKDSSI) is the Beta-hairpin element. The 167-residue stretch at 438–604 (QIDDLLEQIR…PLRKRIADIT (167 aa)) folds into the Helicase C-terminal domain. Positions 666–701 (ADLIEQMSQQMHQAAADLQFELAARLRDEVGELKKE) constitute a UVR domain.

Belongs to the UvrB family. Forms a heterotetramer with UvrA during the search for lesions. Interacts with UvrC in an incision complex.

It is found in the cytoplasm. Functionally, the UvrABC repair system catalyzes the recognition and processing of DNA lesions. A damage recognition complex composed of 2 UvrA and 2 UvrB subunits scans DNA for abnormalities. Upon binding of the UvrA(2)B(2) complex to a putative damaged site, the DNA wraps around one UvrB monomer. DNA wrap is dependent on ATP binding by UvrB and probably causes local melting of the DNA helix, facilitating insertion of UvrB beta-hairpin between the DNA strands. Then UvrB probes one DNA strand for the presence of a lesion. If a lesion is found the UvrA subunits dissociate and the UvrB-DNA preincision complex is formed. This complex is subsequently bound by UvrC and the second UvrB is released. If no lesion is found, the DNA wraps around the other UvrB subunit that will check the other stand for damage. This Micrococcus luteus (strain ATCC 4698 / DSM 20030 / JCM 1464 / CCM 169 / CCUG 5858 / IAM 1056 / NBRC 3333 / NCIMB 9278 / NCTC 2665 / VKM Ac-2230) (Micrococcus lysodeikticus) protein is UvrABC system protein B.